The chain runs to 262 residues: 2-aminoethylphosphonate dioxygenase (262 aa).

Residue lysine 108 coordinates 2-oxoglutarate. Fe cation-binding residues include histidine 118, aspartate 120, and histidine 198.

It belongs to the PhyH family. Fe(2+) is required as a cofactor.

It carries out the reaction (2-aminoethyl)phosphonate + 2-oxoglutarate + O2 = (1R)-(2-amino-1-hydroxyethyl)phosphonate + succinate + CO2. Its activity is regulated as follows. Activity is enhanced by ascorbate. Its function is as follows. Involved in the degradation of the organophosphonate 2-aminoethylphosphonic acid (2-AEP). Catalyzes the hydroxylation of 2-aminoethylphosphonic acid to yield (2-amino-1-hydroxyethyl)phosphonic acid. In Uncultured bacterium HF130_AEPn_1, this protein is 2-aminoethylphosphonate dioxygenase.